The primary structure comprises 440 residues: Sequestosome-1 (440 aa).

Ala-2 carries the N-acetylalanine modification. The segment at 2 to 50 is interaction with LCK; the sequence is ASLTVKAYLLGKEDAAREIRRFSFCCSPEPEAEAEAAAGPGPCERLLSR. A PB1 domain is found at 3–102; that stretch reads SLTVKAYLLG…DIFRIYIKEK (100 aa). At Ser-24 the chain carries Phosphoserine. Residues 43–107 form an interaction with PRKCZ and dimerization region; the sequence is PCERLLSRVA…YIKEKKECRR (65 aa). An interaction with PAWR region spans residues 50 to 80; that stretch reads RVAALFPALRPGGFQAHYRDEDGDLVAFSSD. Lys-91 participates in a covalent cross-link: Glycyl lysine isopeptide (Lys-Gly) (interchain with G-Cter in ubiquitin). Positions 122–224 are interaction with GABRR3; it reads VHPNVICDGC…EARPGPTAES (103 aa). The ZZ-type zinc finger occupies 123 to 173; the sequence is HPNVICDGCNGPVVGTRYKCSVCPDYDLCSVCEGKGLHRGHTKLAFPSPFG. Positions 128, 131, 142, and 145 each coordinate Zn(2+). Tyr-148 bears the Phosphotyrosine mark. Residues Cys-151, Cys-154, His-160, and His-163 each contribute to the Zn(2+) site. Phosphoserine is present on residues Ser-170 and Ser-176. The LIM protein-binding (LB) stretch occupies residues 170–220; the sequence is SPFGHLSEGFSHSRWLRKVKHGHFGWPGWEMGPPGNWSPRPPRAGEARPGP. Lys-189 participates in a covalent cross-link: Glycyl lysine isopeptide (Lys-Gly) (interchain with G-Cter in ubiquitin). The disordered stretch occupies residues 196 to 235; sequence PGWEMGPPGNWSPRPPRAGEARPGPTAESASGPSEDPSVN. 4 positions are modified to phosphoserine: Ser-207, Ser-233, Ser-249, and Ser-266. The TRAF6-binding signature appears at 228 to 233; that stretch reads PSEDPS. Residues 264–390 form a disordered region; that stretch reads KRSRLTPVSP…ALYPHLPPEA (127 aa). Phosphothreonine is present on Thr-269. The tract at residues 269–440 is interaction with NTRK1; that stretch reads TPVSPESSST…IQYSKHPPPL (172 aa). Phosphoserine is present on residues Ser-272 and Ser-282. Residues 283 to 296 are compositionally biased toward low complexity; that stretch reads SSQPSSCCSDPSKP. 2 S-palmitoyl cysteine lipidation sites follow: Cys-289 and Cys-290. Ser-306 is subject to Phosphoserine. Residues 310-324 are compositionally biased toward basic and acidic residues; it reads QMRKIALESEGRPEE. Residues 321 to 342 are MAP1LC3B-binding; the sequence is RPEEQMESDNCSGGDDDWTHLS. Phosphoserine occurs at positions 328 and 332. The LIR signature appears at 336 to 341; sequence DDWTHL. The span at 337–347 shows a compositional bias: basic and acidic residues; that stretch reads DWTHLSSKEVD. Positions 347–352 are interaction with KEAP1; sequence DPSTGE. Ser-349 bears the Phosphoserine; by ULK1 mark. Polar residues predominate over residues 351-373; the sequence is GELQSLQMPESEGPSSLDPSQEG. A phosphoserine mark is found at Ser-355, Ser-361, Ser-365, and Ser-366. Residues 389–434 enclose the UBA domain; the sequence is EADPRLIESLSQMLSMGFSDEGGWLTRLLQTKNYDIGAALDTIQYS. Residue Ser-403 is modified to Phosphoserine; by CK2, ULK1 and TBK1. Phosphoserine; by ULK1 is present on Ser-407. 2 positions are modified to N6-acetyllysine; alternate: Lys-420 and Lys-435. Lys-420 is covalently cross-linked (Glycyl lysine isopeptide (Lys-Gly) (interchain with G-Cter in ubiquitin); alternate). Residue Lys-435 forms a Glycyl lysine isopeptide (Lys-Gly) (interchain with G-Cter in SUMO2); alternate linkage.

In terms of assembly, homooligomer or heterooligomer; may form homotypic arrays. Dimerization interferes with ubiquitin binding. Component of a ternary complex with PAWR and PRKCZ. Forms a complex with JUB/Ajuba, PRKCZ and TRAF6. Identified in a complex with TRAF6 and CYLD. Identified in a heterotrimeric complex with ubiquitin and ZFAND5, where ZFAND5 and SQSTM1 both interact with the same ubiquitin molecule. Interacts (via LIR motif) with MAP1LC3A and MAP1LC3B, as well as with other ATG8 family members, including GABARAP, GABARAPL1 and GABARAPL2; these interactions are necessary for the recruitment MAP1 LC3 family members to inclusion bodies containing polyubiquitinated protein aggregates and for their degradation by autophagy. Interacts directly with PRKCI and PRKCZ. Interacts with EBI3, LCK, RASA1, NR2F2, NTRK1, NTRK2, NTRK3, NBR1, MAP2K5 and MAPKAPK5. Upon TNF-alpha stimulation, interacts with RIPK1 probably bridging IKBKB to the TNF-R1 complex composed of TNF-R1/TNFRSF1A, TRADD and RIPK1. Interacts with the proteasome subunits PSMD4 and PSMC2. Interacts with TRAF6. Interacts with 'Lys-63'-linked polyubiquitinated MAPT/TAU. Interacts with FHOD3. Interacts with CYLD. Interacts with SESN1. Interacts with SESN2. Interacts with ULK1. Interacts with UBD. Interacts with WDR81; the interaction is direct and regulates the interaction of SQSTM1 with ubiquitinated proteins. Interacts with WDFY3; this interaction is required to recruit WDFY3 to cytoplasmic bodies and to PML bodies. Interacts with LRRC25. Interacts with STING1; leading to relocalization of STING1 to autophagosomes. Interacts (when phosphorylated at Ser-349) with KEAP1; the interaction is direct and inactivates the BCR(KEAP1) complex by sequestering KEAP1 in inclusion bodies, promoting its degradation. Interacts with MOAP1; promoting dissociation of SQSTM1 inclusion bodies that sequester KEAP1. Interacts with GBP1. Interacts with TAX1BP1. Interacts with (ubiquitinated) PEX5; specifically binds PEX5 ubiquitinated at 'Lys-209' in response to reactive oxygen species (ROS). Interacts (via PB1 domain) with TNS2; the interaction leads to sequestration of TNS2 in cytoplasmic aggregates with SQSTM1 and promotes TNS2 ubiquitination and proteasomal degradation. Interacts with IRS1; the interaction is disrupted by the presence of tensin TNS2. Interacts with TRIM5. Interacts with TRIM11 (when ubiquitinated); promoting AIM2 recruitment to autophagosomes and autophagy-dependent degradation of AIM2. Interacts with TRIM13. Interacts with TRIM16. Interacts with TRIM23. Interacts with TRIM50. Interacts with TRIM55. Interacts with ECSIT; this interaction inhibits TLR4 signaling via functional regulation of the TRAF6-ECSIT complex. Interacts with GABRR1, GABRR2 and GABRR3. Interacts with WDR83. Interacts with GRB2. Interacts with USP12; the interaction is independent of USP12 deubiquitinase activity and may be involved in regulation of autophagic flux. Interacts with ASB6. Phosphorylation at Ser-407 by ULK1 destabilizes the UBA dimer interface and increases binding affinity to ubiquitinated proteins. Phosphorylation at Ser-407 also primes for subsequent phosphorylation at Ser-403. Phosphorylation at Ser-403 by CK2 or ULK1 promotes binding to ubiquitinated proteins by increasing the affinity between the UBA domain and polyubiquitin chains. Phosphorylation at Ser-403 by ULK1 is stimulated by SESN2. Phosphorylated at Ser-403 by TBK1, leading to promote relocalization of 'Lys-63'-linked ubiquitinated STING1 to autophagosomes. Phosphorylation at Ser-349 by ULK1 promotes interaction with KEAP1 and inactivation of the BCR(KEAP1) complex, promoting NFE2L2/NRF2 nuclear accumulation and expression of phase II detoxifying enzymes. Phosphorylated in vitro by TTN. Post-translationally, ubiquitinated by UBE2J1 and RNF26 at Lys-435: ubiquitinated SQSTM1 attracts specific vesicle-associated adapters, forming a molecular bridge that restrains cognate vesicles in the perinuclear region and organizes the endosomal pathway for efficient cargo transport. Ubiquitination by UBE2D2 and UBE2D3 increases its ability to bind polyubiquitin chains by destabilizing the UBA dimer interface. Deubiquitination by USP15 releases target vesicles for fast transport into the cell periphery. Ubiquitinated by the BCR(KEAP1) complex at Lys-420, increasing SQSTM1 sequestering activity and promoting its degradation. Ubiquitinated via 'Lys-29' and 'Lys-33'-linked polyubiquitination leading to xenophagic targeting of bacteria and inhibition of their replication. In terms of processing, acetylated at Lys-420 and Lys-435 by KAT5/TIP60, promotes activity by destabilizing the UBA dimer interface and increases binding affinity to ubiquitinated proteins. Deacetylated by HDAC6. Palmitoylation at Cys-289 and Cys-290 by ZDHHC19 is required for efficient autophagic degradation of SQSTM1-cargo complexes by promoting affinity for ATG8 proteins and recruitment of p62 bodies to autophagosomes. Dealmitoylated at Cys-289 and Cys-290 by LYPLA1. Post-translationally, (Microbial infection) Cleaved by S.pyogenes SpeB protease; leading to its degradation. Degradation by SpeB prevents autophagy, promoting to S.pyogenes intracellular replication. In terms of processing, (Microbial infection) Deubiquitinated by Epstein-Barr virus BPLF1; leading to inhibition of the recruitment of MAP1LC3A/LC3 to SQSTM1-positive structures. In terms of tissue distribution, ubiquitously expressed.

The protein localises to the cytoplasmic vesicle. It is found in the autophagosome. Its subcellular location is the preautophagosomal structure. It localises to the cytoplasm. The protein resides in the cytosol. The protein localises to the nucleus. It is found in the PML body. Its subcellular location is the late endosome. It localises to the lysosome. The protein resides in the endoplasmic reticulum. The protein localises to the myofibril. It is found in the sarcomere. Its function is as follows. Molecular adapter required for selective macroautophagy (aggrephagy) by acting as a bridge between polyubiquitinated proteins and autophagosomes. Promotes the recruitment of ubiquitinated cargo proteins to autophagosomes via multiple domains that bridge proteins and organelles in different steps. SQSTM1 first mediates the assembly and removal of ubiquitinated proteins by undergoing liquid-liquid phase separation upon binding to ubiquitinated proteins via its UBA domain, leading to the formation of insoluble cytoplasmic inclusions, known as p62 bodies. SQSTM1 then interacts with ATG8 family proteins on autophagosomes via its LIR motif, leading to p62 body recruitment to autophagosomes, followed by autophagic clearance of ubiquitinated proteins. SQSTM1 is itself degraded along with its ubiquitinated cargos. Also required to recruit ubiquitinated proteins to PML bodies in the nucleus. Also involved in autophagy of peroxisomes (pexophagy) in response to reactive oxygen species (ROS) by acting as a bridge between ubiquitinated PEX5 receptor and autophagosomes. Acts as an activator of the NFE2L2/NRF2 pathway via interaction with KEAP1: interaction inactivates the BCR(KEAP1) complex by sequestering the complex in inclusion bodies, promoting nuclear accumulation of NFE2L2/NRF2 and subsequent expression of cytoprotective genes. Promotes relocalization of 'Lys-63'-linked ubiquitinated STING1 to autophagosomes. Involved in endosome organization by retaining vesicles in the perinuclear cloud: following ubiquitination by RNF26, attracts specific vesicle-associated adapters, forming a molecular bridge that restrains cognate vesicles in the perinuclear region and organizes the endosomal pathway for efficient cargo transport. Sequesters tensin TNS2 into cytoplasmic puncta, promoting TNS2 ubiquitination and proteasomal degradation. May regulate the activation of NFKB1 by TNF-alpha, nerve growth factor (NGF) and interleukin-1. May play a role in titin/TTN downstream signaling in muscle cells. Adapter that mediates the interaction between TRAF6 and CYLD. This is Sequestosome-1 from Homo sapiens (Human).